The sequence spans 280 residues: Phosphonates import ATP-binding protein PhnC (280 aa).

The region spanning 4 to 239 (ITVTNLHKSY…VIDDIYGNIQ (236 aa)) is the ABC transporter domain. 36–43 (GESGAGKS) contributes to the ATP binding site. Residues 246 to 280 (GDDANADVAPTTSSDGGTDAAGGPDQQPASDPHLS) form a disordered region.

This sequence belongs to the ABC transporter superfamily. Phosphonates importer (TC 3.A.1.9.1) family. In terms of assembly, the complex is composed of two ATP-binding proteins (PhnC), two transmembrane proteins (PhnE) and a solute-binding protein (PhnD).

The protein resides in the cell membrane. The enzyme catalyses phosphonate(out) + ATP + H2O = phosphonate(in) + ADP + phosphate + H(+). In terms of biological role, part of the ABC transporter complex PhnCDE involved in phosphonates import. Responsible for energy coupling to the transport system. The chain is Phosphonates import ATP-binding protein PhnC from Halobacterium salinarum (strain ATCC 700922 / JCM 11081 / NRC-1) (Halobacterium halobium).